Consider the following 963-residue polypeptide: Reversion-inducing cysteine-rich protein with Kazal motifs (963 aa).

The N-terminal stretch at 1–28 is a signal peptide; that stretch reads MAAAVAAWPWALFCLAAVPPLLSPGAAG. The Knot 1 repeat unit spans residues 31–78; the sequence is CCYHAKDNLMCRDVCEQILSSKSDSRLKHLLQRAPEYCPESMGEVWGC. The tract at residues 31–332 is 5 X Knot repeats; sequence CCYHAKDNLM…NAVEVSMLTC (302 aa). A glycan (N-linked (GlcNAc...) asparagine) is linked at Asn80. Knot repeat units lie at residues 98–135 and 145–191; these read CCELAIAVECRQACKQASSKNDILKVCRKEYENALFSC and CCSY…LIHC. N-linked (GlcNAc...) asparagine glycosylation occurs at Asn194. Knot repeat units follow at residues 210-257 and 286-332; these read CCDR…LWQC and CCSK…MLTC. N-linked (GlcNAc...) asparagine glycosylation is found at Asn291 and Asn346. 3 Kazal-like domains span residues 621 to 667, 692 to 746, and 749 to 783; these read KFTG…SCIS, SFGK…PCQP, and KSVEPVCGHNGETYSSVCAAYSDRVAVDYYGHCQA. Intrachain disulfides connect Cys627/Cys652, Cys629/Cys648, Cys637/Cys665, Cys710/Cys729, Cys718/Cys744, and Cys755/Cys781. Residue Ser936 is the site of GPI-anchor amidated serine attachment. The propeptide occupies 937–963; that stretch reads PSVKVGPVLHCLFISFSFTLLKLMDYI.

It belongs to the RECK family. As to quaternary structure, interacts (via knot repeats) with WNT7A (via disordered linker region); the interaction is direct. Interacts (via knot repeats) with WNT7B (via disordered linker region); the interaction is direct. Interacts with ADGRA2; the interaction is direct. In terms of processing, localizes to the plasma membrane via its GPI-anchor. Released from the plasma membrane following cleavage of the GPI-anchor by GDPD5/GPE2.

The protein resides in the cell membrane. Functionally, functions together with ADGRA2 to enable brain endothelial cells to selectively respond to Wnt7 signals (WNT7A or WNT7B). Plays a key role in Wnt7-specific responses: required for central nervous system (CNS) angiogenesis and blood-brain barrier regulation. Acts as a Wnt7-specific coactivator of canonical Wnt signaling by decoding Wnt ligands: acts by interacting specifically with the disordered linker region of Wnt7, thereby conferring ligand selectivity for Wnt7. ADGRA2 is then required to deliver RECK-bound Wnt7 to frizzled by assembling a higher-order RECK-ADGRA2-Fzd-LRP5-LRP6 complex. Also acts as a serine protease inhibitor. This Gallus gallus (Chicken) protein is Reversion-inducing cysteine-rich protein with Kazal motifs.